Consider the following 243-residue polypeptide: Ubiquinone/menaquinone biosynthesis C-methyltransferase UbiE (243 aa).

S-adenosyl-L-methionine is bound by residues Thr69, Asp90, and 116 to 117 (DA).

It belongs to the class I-like SAM-binding methyltransferase superfamily. MenG/UbiE family.

It carries out the reaction a 2-demethylmenaquinol + S-adenosyl-L-methionine = a menaquinol + S-adenosyl-L-homocysteine + H(+). It catalyses the reaction a 2-methoxy-6-(all-trans-polyprenyl)benzene-1,4-diol + S-adenosyl-L-methionine = a 5-methoxy-2-methyl-3-(all-trans-polyprenyl)benzene-1,4-diol + S-adenosyl-L-homocysteine + H(+). It functions in the pathway quinol/quinone metabolism; menaquinone biosynthesis; menaquinol from 1,4-dihydroxy-2-naphthoate: step 2/2. Its pathway is cofactor biosynthesis; ubiquinone biosynthesis. Its function is as follows. Methyltransferase required for the conversion of demethylmenaquinol (DMKH2) to menaquinol (MKH2) and the conversion of 2-polyprenyl-6-methoxy-1,4-benzoquinol (DDMQH2) to 2-polyprenyl-3-methyl-6-methoxy-1,4-benzoquinol (DMQH2). The sequence is that of Ubiquinone/menaquinone biosynthesis C-methyltransferase UbiE from Burkholderia vietnamiensis (strain G4 / LMG 22486) (Burkholderia cepacia (strain R1808)).